A 389-amino-acid polypeptide reads, in one-letter code: Cellobiose 2-epimerase (389 aa).

Belongs to the cellobiose 2-epimerase family.

It catalyses the reaction D-cellobiose = beta-D-glucosyl-(1-&gt;4)-D-mannopyranose. Functionally, catalyzes the reversible epimerization of cellobiose to 4-O-beta-D-glucopyranosyl-D-mannose (Glc-Man). The chain is Cellobiose 2-epimerase from Ruminococcus albus (strain ATCC 27210 / DSM 20455 / JCM 14654 / NCDO 2250 / 7).